The following is a 275-amino-acid chain: Notch homolog 2 N-terminal-like protein B (275 aa).

The signal sequence occupies residues Met1–Ala25. EGF-like domains lie at Leu26 to Gln63, His64 to Gln102, Thr105 to Gln143, and Trp144 to Glu180. 17 cysteine pairs are disulfide-bonded: Cys28/Cys41, Cys35/Cys51, Cys53/Cys62, Cys68/Cys79, Cys73/Cys90, Cys92/Cys101, Cys109/Cys121, Cys115/Cys131, Cys133/Cys142, Cys148/Cys159, Cys153/Cys168, Cys170/Cys179, Cys186/Cys198, Cys192/Cys207, Cys209/Cys218, Cys225/Cys236, and Cys230/Cys246. A glycan (N-linked (GlcNAc...) asparagine) is linked at Asn46. N-linked (GlcNAc...) asparagine glycosylation is present at Asn155. An EGF-like 5; calcium-binding domain is found at Asp182–Asp219. One can recognise an EGF-like 6 domain in the interval Leu221 to Glu258.

This sequence belongs to the NOTCH family. Interacts with NOTCH2. Interacts with DLL1; the interaction is direct. Expressed in radial glia neural stem cells during cortical development.

Its subcellular location is the secreted. Human-specific protein that promotes neural progenitor proliferation and evolutionary expansion of the brain neocortex by regulating the Notch signaling pathway. Able to promote neural progenitor self-renewal, possibly by down-regulating neuronal differentiation genes, thereby delaying the differentiation of neuronal progenitors and leading to an overall final increase in neuronal production. Acts by enhancing the Notch signaling pathway via two different mechanisms that probably work in parallel to reach the same effect. Enhances Notch signaling pathway in a non-cell-autonomous manner via direct interaction with NOTCH2. Also promotes Notch signaling pathway in a cell-autonomous manner through inhibition of cis DLL1-NOTCH2 interactions, which promotes neuronal differentiation. The sequence is that of Notch homolog 2 N-terminal-like protein B from Homo sapiens (Human).